The primary structure comprises 85 residues: Metallothionein-like protein 4B (85 aa).

Residues 1–20 form a disordered region; it reads MADTGKGSASASCNDRCGCP.

This sequence belongs to the metallothionein superfamily. Type 15 family. Expressed specifically in seeds.

It localises to the cytoplasm. The protein localises to the nucleus. It is found in the cell membrane. In terms of biological role, metallothioneins have a high content of cysteine residues that bind various heavy metals. Functions as a metal chelator of copper (Cu) and zinc (Zn). Plays a role in storing and distributing Zn ion in seed. The chain is Metallothionein-like protein 4B (MT4B) from Arabidopsis thaliana (Mouse-ear cress).